We begin with the raw amino-acid sequence, 159 residues long: 2-C-methyl-D-erythritol 2,4-cyclodiphosphate synthase (159 aa).

A divalent metal cation contacts are provided by Asp-8 and His-10. Residues 8–10 (DVH) and 34–35 (HS) each bind 4-CDP-2-C-methyl-D-erythritol 2-phosphate. His-42 serves as a coordination point for a divalent metal cation. 4-CDP-2-C-methyl-D-erythritol 2-phosphate contacts are provided by residues 56–58 (DIG), 61–65 (FPDTD), 100–106 (AQAPRML), 132–135 (TTTE), Phe-139, and Arg-142.

This sequence belongs to the IspF family. In terms of assembly, homotrimer. Requires a divalent metal cation as cofactor.

It catalyses the reaction 4-CDP-2-C-methyl-D-erythritol 2-phosphate = 2-C-methyl-D-erythritol 2,4-cyclic diphosphate + CMP. The protein operates within isoprenoid biosynthesis; isopentenyl diphosphate biosynthesis via DXP pathway; isopentenyl diphosphate from 1-deoxy-D-xylulose 5-phosphate: step 4/6. Involved in the biosynthesis of isopentenyl diphosphate (IPP) and dimethylallyl diphosphate (DMAPP), two major building blocks of isoprenoid compounds. Catalyzes the conversion of 4-diphosphocytidyl-2-C-methyl-D-erythritol 2-phosphate (CDP-ME2P) to 2-C-methyl-D-erythritol 2,4-cyclodiphosphate (ME-CPP) with a corresponding release of cytidine 5-monophosphate (CMP). The protein is 2-C-methyl-D-erythritol 2,4-cyclodiphosphate synthase of Escherichia coli O45:K1 (strain S88 / ExPEC).